Consider the following 87-residue polypeptide: MSWPRGDSKKKKIEGGETLLDNRVARPHHILPLPQIQNCIRERRKKKGIYIPHTLIFWMCPRAMGTAITFEFLQPKAQPRVHRDSPT.

The helical transmembrane segment at 48–70 (GIYIPHTLIFWMCPRAMGTAITF) threads the bilayer.

The protein resides in the host membrane. This is an uncharacterized protein from Gallid herpesvirus 2 (strain Chicken/Md5/ATCC VR-987) (GaHV-2).